The following is a 149-amino-acid chain: Large ribosomal subunit protein eL19 (149 aa).

Residues 46–99 (EDGTIEAKTAKGNSRGRARKRQQKRAYGHKKGHGSRKGRSGGRQNEKEDWQSRI) form a disordered region. Basic residues predominate over residues 59–85 (SRGRARKRQQKRAYGHKKGHGSRKGRS). A compositionally biased stretch (basic and acidic residues) spans 89 to 99 (QNEKEDWQSRI).

It belongs to the eukaryotic ribosomal protein eL19 family. Part of the 50S ribosomal subunit.

Binds to the 23S rRNA. This is Large ribosomal subunit protein eL19 from Natronomonas pharaonis (strain ATCC 35678 / DSM 2160 / CIP 103997 / JCM 8858 / NBRC 14720 / NCIMB 2260 / Gabara) (Halobacterium pharaonis).